A 120-amino-acid polypeptide reads, in one-letter code: NAD(P)H-quinone oxidoreductase subunit 3, chloroplastic (120 aa).

The next 3 membrane-spanning stretches (helical) occupy residues 9 to 29, 64 to 84, and 88 to 108; these read IFWA…FVSG, MFAL…PWAM, and VLGI…IVGL.

Belongs to the complex I subunit 3 family. NDH is composed of at least 16 different subunits, 5 of which are encoded in the nucleus.

The protein resides in the plastid. It is found in the chloroplast thylakoid membrane. The enzyme catalyses a plastoquinone + NADH + (n+1) H(+)(in) = a plastoquinol + NAD(+) + n H(+)(out). It carries out the reaction a plastoquinone + NADPH + (n+1) H(+)(in) = a plastoquinol + NADP(+) + n H(+)(out). In terms of biological role, NDH shuttles electrons from NAD(P)H:plastoquinone, via FMN and iron-sulfur (Fe-S) centers, to quinones in the photosynthetic chain and possibly in a chloroplast respiratory chain. The immediate electron acceptor for the enzyme in this species is believed to be plastoquinone. Couples the redox reaction to proton translocation, and thus conserves the redox energy in a proton gradient. The protein is NAD(P)H-quinone oxidoreductase subunit 3, chloroplastic of Daucus carota (Wild carrot).